We begin with the raw amino-acid sequence, 543 residues long: RuBisCO large subunit-binding protein subunit alpha, chloroplastic (543 aa).

The N-terminal 2 residues, 1 to 2, are a transit peptide targeting the chloroplast; the sequence is GA.

It belongs to the chaperonin (HSP60) family. As to quaternary structure, oligomer of probably six alpha and six beta subunits.

The protein resides in the plastid. Its subcellular location is the chloroplast. In terms of biological role, this protein binds RuBisCO small and large subunits and is implicated in the assembly of the enzyme oligomer. The protein is RuBisCO large subunit-binding protein subunit alpha, chloroplastic of Triticum aestivum (Wheat).